Here is a 405-residue protein sequence, read N- to C-terminus: Deoxyguanosinetriphosphate triphosphohydrolase-like protein (405 aa).

Residues 75-219 form the HD domain; sequence RLTHTIEVAQ…AAIADDIAYN (145 aa).

This sequence belongs to the dGTPase family. Type 2 subfamily.

In Rhizobium meliloti (strain 1021) (Ensifer meliloti), this protein is Deoxyguanosinetriphosphate triphosphohydrolase-like protein.